The chain runs to 330 residues: Exostosin-like 2 (330 aa).

Over 1–21 (MMRGCHICKLPGRVMGIRVLR) the chain is Cytoplasmic. Residues 22 to 42 (FSLVVILVLLLVAGALTNLLP) form a helical; Signal-anchor for type II membrane protein membrane-spanning segment. Residues 43-330 (NIKEDKMLTL…FPYANHKSKM (288 aa)) are Lumenal-facing. Glutamine 72 contributes to the UDP-N-acetyl-alpha-D-galactosamine binding site. UDP-N-acetyl-alpha-D-glucosamine is bound at residue glutamine 72. N-linked (GlcNAc...) asparagine glycosylation is present at asparagine 75. The UDP-N-acetyl-alpha-D-galactosamine site is built by arginine 76, asparagine 101, asparagine 130, arginine 135, aspartate 151, aspartate 152, aspartate 153, and aspartate 245. UDP-N-acetyl-alpha-D-glucosamine is bound by residues arginine 76, asparagine 101, asparagine 130, arginine 135, aspartate 151, aspartate 152, aspartate 153, aspartate 245, aspartate 246, and arginine 293. Aspartate 153 contacts Mn(2+). Cysteine 244 and cysteine 296 are disulfide-bonded. Aspartate 246 is a catalytic residue. Position 293 (arginine 293) interacts with UDP-N-acetyl-alpha-D-galactosamine.

This sequence belongs to the glycosyltransferase 47 family. Mn(2+) is required as a cofactor.

The protein resides in the endoplasmic reticulum membrane. The enzyme catalyses 3-O-(beta-D-GlcA-(1-&gt;3)-beta-D-Gal-(1-&gt;3)-beta-D-Gal-(1-&gt;4)-beta-D-Xyl)-L-seryl-[protein] + UDP-N-acetyl-alpha-D-glucosamine = 3-O-(alpha-D-GlcNAc-(1-&gt;4)-beta-D-GlcA-(1-&gt;3)-beta-D-Gal-(1-&gt;3)-beta-D-Gal-(1-&gt;4)-beta-D-Xyl)-L-seryl-[protein] + UDP + H(+). Its function is as follows. Glycosyltransferase required for the biosynthesis of heparan-sulfate and responsible for the alternating addition of beta-1-4-linked glucuronic acid (GlcA) and alpha-1-4-linked N-acetylglucosamine (GlcNAc) units to nascent heparan sulfate chains. This is Exostosin-like 2 (Extl2) from Mus musculus (Mouse).